A 404-amino-acid chain; its full sequence is Schlafen-like protein 1 (404 aa).

2 disordered regions span residues 1–31 and 139–170; these read MTPM…LPTE and GPLS…AWPT. Polar residues predominate over residues 7-16; the sequence is SVQTQVSEPF. The segment covering 152–165 has biased composition (low complexity); sequence GLSPGPNPGSGVPL. 258 to 265 lines the ATP pocket; sequence GVEDSGLV. Residues 365-395 are a coiled coil; the sequence is RWLVELGKLEERVKVLTMEKEQLQQQLQQHG.

Belongs to the Schlafen family. Subgroup I subfamily.

This Macaca fascicularis (Crab-eating macaque) protein is Schlafen-like protein 1 (SLFNL1).